The chain runs to 402 residues: MAARPGPLWLLGLTLCALGGGGPGLRPPPGCPQRRLGARERRDVQREILAVLGLPGRPRPRAPPAASRLPASAPLFMLDLYHAMAGDDDEDGAPAEQRLGRADLVMSFVNMVERDRALGHQEPHWKEFRFDLTQIPAGEAVTAAEFRIYKVPSIHLLNRTLHVSMFQVVQEQSNRESDLFFLDLQTLRAGDEGWLVLDVTAASDCWLLKRHKDLGLRLYVETEDGHSVDPGLAGLLGQRAPRSQQPFVVTFFRASPSPIRTPRAVRPLRRRQPKKSNELPQANRLPGIFDDVRGSHGRQVCRRHELYVSFQDLGWLDWVIAPQGYSAYYCEGECSFPLDSCMNATNHAILQSLVHLMKPNAVPKACCAPTKLSATSVLYYDSSNNVILRKHRNMVVKACGCH.

The signal sequence occupies residues 1–19; sequence MAARPGPLWLLGLTLCALG. The propeptide occupies 20–263; it reads GGGPGLRPPP…ASPSPIRTPR (244 aa). N-linked (GlcNAc...) asparagine glycans are attached at residues asparagine 158 and asparagine 343. 3 disulfide bridges follow: cysteine 301–cysteine 367, cysteine 330–cysteine 399, and cysteine 334–cysteine 401.

The protein belongs to the TGF-beta family. Homodimer; disulfide-linked.

It localises to the secreted. Its function is as follows. Induces cartilage and bone formation. May be the osteoinductive factor responsible for the phenomenon of epithelial osteogenesis. Plays a role in calcium regulation and bone homeostasis. Signaling protein involved in regulation of thermogenesis and energy balance. Proposed to increase the peripheral response of brown adipose tissue (BAT) to adrenergic stimulation while acting centrally in the hypothalamus to increase sympathetic output to BAT. Functionally, growth factor of the TGF-beta superfamily that plays important role in various biological processes, including spermatogenesis, osteogenesis, steroidogenesis as well as regulation of energy balance. Initiates the canonical BMP signaling cascade by associating with type I receptor BMPR1A and type II receptor BMPR2. Once all three components are bound together in a complex at the cell surface, BMPR2 phosphorylates and activates BMPR1A. In turn, BMPR1A propagates signal by phosphorylating SMAD1/5/8 that travel to the nucleus and act as activators and repressors of transcription of target genes. In addition, activates the SMAD2/3 pathway. This chain is Bone morphogenetic protein 8A (BMP8A), found in Homo sapiens (Human).